Reading from the N-terminus, the 181-residue chain is Probable pyruvoyl-dependent arginine decarboxylase (181 aa).

Position 43 is a pyruvic acid (Ser) (Ser43).

This sequence belongs to the PdaD family. Requires pyruvate as cofactor.

It catalyses the reaction L-arginine + H(+) = agmatine + CO2. In Prosthecochloris aestuarii (strain DSM 271 / SK 413), this protein is Probable pyruvoyl-dependent arginine decarboxylase.